The following is a 133-amino-acid chain: Ribosome-binding factor A (133 aa).

This sequence belongs to the RbfA family. As to quaternary structure, monomer. Binds 30S ribosomal subunits, but not 50S ribosomal subunits or 70S ribosomes.

Its subcellular location is the cytoplasm. One of several proteins that assist in the late maturation steps of the functional core of the 30S ribosomal subunit. Associates with free 30S ribosomal subunits (but not with 30S subunits that are part of 70S ribosomes or polysomes). Required for efficient processing of 16S rRNA. May interact with the 5'-terminal helix region of 16S rRNA. The protein is Ribosome-binding factor A of Salmonella heidelberg (strain SL476).